Reading from the N-terminus, the 752-residue chain is MEVQKGLIEAFYNTYPLEKAKELDKSPLCSEYELFIKELWPSIVESFHNSTEFETAIRFCCYETARKSEIGLEERLKCLFAILDLLVIGNEINESFCDHLLPFLILEELMDIHTVNECAKLYEYFETRPSLMKGIVSNRGRGPVLLRISNELLRRLSRQENSSFCGRIDILLSKAFPPEERSGANLRGDYNTVHSFGKVELSPPSTPISDRTDLSYHKKLNTLFTAYWDLQCMCSNPPKLLASDTLPKFIDAAGSAIQAFESILQNTFFNGKSNPTIDPNSSSLLSEKYITLDKGFPSKYIYSRSLFEYQLSDEDFRLQAILQLIIIFDFLLDHSKERIERRTLEKWTNKAVIPIVILSDEDTSKLNELSKEAYSFLHTARCGSVQRTIKEIIHIEGNWKLWKGLGCPSLEKPLVDKAAIDEAVEGLKKLTNTPVKLRFAMGNAALSRLWEQAGENTLDDLKKEERYRIPSPESFLSGVKADKFEIEEAVRDDDKHFHEQSLATKTWRAFRSAINSHLQNFSDTGLGDVELLCNSIEGKPTTSKITPSIPPAFDIHIIEGEELLEEMKKRENVKHNSQNFASPMQTDAEGDIVQNEEEKESVEVEEGKHKNDLPKVSPKPPTEGVDSEVNGESLVQVNKVLKSEDDNTSEASKDPSSHVKSPENIEKLKQNDDHFEVTEEITSTINSKISEKQENNVAETILEVTSSPKSSENSQKQSEITKKRGRDEEDEPSDLHSSPKRPKTGEDGEIVL.

Phosphoserine is present on residues Ser202 and Ser582. The disordered stretch occupies residues 596–752; sequence EEEKESVEVE…KTGEDGEIVL (157 aa). Composition is skewed to basic and acidic residues over residues 601–613 and 641–677; these read SVEVEEGKHKNDL and LKSEDDNTSEASKDPSSHVKSPENIEKLKQNDDHFEV. A compositionally biased stretch (polar residues) spans 695 to 718; that stretch reads NNVAETILEVTSSPKSSENSQKQS. Phosphoserine occurs at positions 707 and 738.

This is an uncharacterized protein from Schizosaccharomyces pombe (strain 972 / ATCC 24843) (Fission yeast).